The chain runs to 64 residues: Alpha-conotoxin CnIL (64 aa).

The first 21 residues, 1-21 (MGMRMMFTVFLLVVLTTTVVS), serve as a signal peptide directing secretion. A propeptide spanning residues 22–49 (FPSDSASDGRDDEAKDERSDIYESKRDG) is cleaved from the precursor. 2 cysteine pairs are disulfide-bonded: Cys51–Cys56 and Cys52–Cys62. Cys62 bears the Cysteine amide mark.

Belongs to the conotoxin A superfamily. As to expression, expressed by the venom duct.

Its subcellular location is the secreted. This is Alpha-conotoxin CnIL from Conus consors (Singed cone).